The primary structure comprises 193 residues: dCTP deaminase (193 aa).

Residues 110 to 115, aspartate 128, 136 to 138, tyrosine 171, lysine 178, and glutamine 182 each bind dCTP; these read RSSLAR and VLE. Glutamate 138 (proton donor/acceptor) is an active-site residue. Basic and acidic residues predominate over residues 170 to 181; that stretch reads PYNRRQDAKYRD. The disordered stretch occupies residues 170–193; it reads PYNRRQDAKYRDQQGAVASRIDKD.

Belongs to the dCTP deaminase family. As to quaternary structure, homotrimer.

The catalysed reaction is dCTP + H2O + H(+) = dUTP + NH4(+). It participates in pyrimidine metabolism; dUMP biosynthesis; dUMP from dCTP (dUTP route): step 1/2. Functionally, catalyzes the deamination of dCTP to dUTP. The protein is dCTP deaminase of Enterobacter sp. (strain 638).